Here is a 217-residue protein sequence, read N- to C-terminus: Insulin-like growth factor 2.S (217 aa).

The signal sequence occupies residues 1–56 (MEQLSCKHRSSSVEAEAQLCRQTESRSTQLPRMSVMRHLFLLSITFLVYTLDSAKA). The interval 57 to 83 (YRATETLCGGELVDTLQFVCGDRGFYF) is b. 3 disulfides stabilise this stretch: Cys-64/Cys-103, Cys-76/Cys-116, and Cys-102/Cys-107. The interval 84-96 (STNNGRSNRRPNR) is c. The a stretch occupies residues 97–117 (GIVDVCCFKSCDLELLETYCA). The interval 118–123 (KPTKNE) is d. A propeptide spans 124–217 (RDVSTAPATA…LQQASEPSHN (94 aa)) (e peptide).

It belongs to the insulin family.

The protein resides in the secreted. In terms of biological role, the insulin-like growth factors, isolated from plasma, are structurally and functionally related to insulin but have a much higher growth-promoting activity. Promotes anterior neural development. Acts as a ligand for integrin which is required for IGF2 signaling. This chain is Insulin-like growth factor 2.S, found in Xenopus laevis (African clawed frog).